A 351-amino-acid chain; its full sequence is Biotin synthase (351 aa).

In terms of domain architecture, Radical SAM core spans 44 to 262 (NRVQVSTLLS…LAVARIMMPK (219 aa)). [4Fe-4S] cluster contacts are provided by Cys-59, Cys-63, and Cys-66. Residues Cys-103, Cys-134, Cys-194, and Arg-266 each contribute to the [2Fe-2S] cluster site.

The protein belongs to the radical SAM superfamily. Biotin synthase family. As to quaternary structure, homodimer. [4Fe-4S] cluster is required as a cofactor. Requires [2Fe-2S] cluster as cofactor.

It catalyses the reaction (4R,5S)-dethiobiotin + (sulfur carrier)-SH + 2 reduced [2Fe-2S]-[ferredoxin] + 2 S-adenosyl-L-methionine = (sulfur carrier)-H + biotin + 2 5'-deoxyadenosine + 2 L-methionine + 2 oxidized [2Fe-2S]-[ferredoxin]. It functions in the pathway cofactor biosynthesis; biotin biosynthesis; biotin from 7,8-diaminononanoate: step 2/2. In terms of biological role, catalyzes the conversion of dethiobiotin (DTB) to biotin by the insertion of a sulfur atom into dethiobiotin via a radical-based mechanism. The chain is Biotin synthase from Stutzerimonas stutzeri (strain A1501) (Pseudomonas stutzeri).